Consider the following 465-residue polypeptide: Cysteine--tRNA ligase (465 aa).

C28 contacts Zn(2+). Positions 30-40 (PTVYNYIHVGN) match the 'HIGH' region motif. 3 residues coordinate Zn(2+): C208, H233, and E237. A 'KMSKS' region motif is present at residues 265–269 (KMSKS). Position 268 (K268) interacts with ATP.

The protein belongs to the class-I aminoacyl-tRNA synthetase family. As to quaternary structure, monomer. Zn(2+) serves as cofactor.

Its subcellular location is the cytoplasm. The enzyme catalyses tRNA(Cys) + L-cysteine + ATP = L-cysteinyl-tRNA(Cys) + AMP + diphosphate. In Exiguobacterium sp. (strain ATCC BAA-1283 / AT1b), this protein is Cysteine--tRNA ligase.